Reading from the N-terminus, the 412-residue chain is Multifunctional CCA protein (412 aa).

Glycine 8 and arginine 11 together coordinate ATP. The CTP site is built by glycine 8 and arginine 11. Mg(2+) contacts are provided by aspartate 21 and aspartate 23. ATP contacts are provided by arginine 91, arginine 137, and arginine 140. Residues arginine 91, arginine 137, and arginine 140 each contribute to the CTP site. Residues threonine 228–tryptophan 329 enclose the HD domain.

It belongs to the tRNA nucleotidyltransferase/poly(A) polymerase family. Bacterial CCA-adding enzyme type 1 subfamily. As to quaternary structure, monomer. Can also form homodimers and oligomers. Mg(2+) serves as cofactor. It depends on Ni(2+) as a cofactor.

It catalyses the reaction a tRNA precursor + 2 CTP + ATP = a tRNA with a 3' CCA end + 3 diphosphate. The catalysed reaction is a tRNA with a 3' CCA end + 2 CTP + ATP = a tRNA with a 3' CCACCA end + 3 diphosphate. Functionally, catalyzes the addition and repair of the essential 3'-terminal CCA sequence in tRNAs without using a nucleic acid template. Adds these three nucleotides in the order of C, C, and A to the tRNA nucleotide-73, using CTP and ATP as substrates and producing inorganic pyrophosphate. tRNA 3'-terminal CCA addition is required both for tRNA processing and repair. Also involved in tRNA surveillance by mediating tandem CCA addition to generate a CCACCA at the 3' terminus of unstable tRNAs. While stable tRNAs receive only 3'-terminal CCA, unstable tRNAs are marked with CCACCA and rapidly degraded. The chain is Multifunctional CCA protein from Shewanella pealeana (strain ATCC 700345 / ANG-SQ1).